A 178-amino-acid chain; its full sequence is Ribosomal RNA small subunit methyltransferase G (178 aa).

S-adenosyl-L-methionine-binding positions include G54, L59, 105–106 (LE), and R120.

The protein belongs to the methyltransferase superfamily. RNA methyltransferase RsmG family.

Its subcellular location is the cytoplasm. It catalyses the reaction guanosine(527) in 16S rRNA + S-adenosyl-L-methionine = N(7)-methylguanosine(527) in 16S rRNA + S-adenosyl-L-homocysteine. Its function is as follows. Specifically methylates the N7 position of guanine in position 527 of 16S rRNA. This Helicobacter pylori (strain J99 / ATCC 700824) (Campylobacter pylori J99) protein is Ribosomal RNA small subunit methyltransferase G.